Consider the following 735-residue polypeptide: 5-methyltetrahydropteroyltriglutamate--homocysteine methyltransferase (735 aa).

Residues 15–18 and K104 each bind 5-methyltetrahydropteroyltri-L-glutamate; that span reads REFK. L-homocysteine contacts are provided by residues 409-411 and E462; that span reads IGS. Residues 409–411 and E462 each bind L-methionine; that span reads IGS. 5-methyltetrahydropteroyltri-L-glutamate is bound by residues 493 to 494 and W539; that span reads RC. Residue D577 coordinates L-homocysteine. Residue D577 coordinates L-methionine. E583 contributes to the 5-methyltetrahydropteroyltri-L-glutamate binding site. Zn(2+) contacts are provided by H618, C620, and E642. H672 (proton donor) is an active-site residue. C704 is a binding site for Zn(2+).

This sequence belongs to the vitamin-B12 independent methionine synthase family. Requires Zn(2+) as cofactor.

The catalysed reaction is 5-methyltetrahydropteroyltri-L-glutamate + L-homocysteine = tetrahydropteroyltri-L-glutamate + L-methionine. Its pathway is amino-acid biosynthesis; L-methionine biosynthesis via de novo pathway; L-methionine from L-homocysteine (MetE route): step 1/1. In terms of biological role, catalyzes the transfer of a methyl group from 5-methyltetrahydrofolate to homocysteine resulting in methionine formation. The protein is 5-methyltetrahydropteroyltriglutamate--homocysteine methyltransferase of Thermotoga petrophila (strain ATCC BAA-488 / DSM 13995 / JCM 10881 / RKU-1).